Consider the following 212-residue polypeptide: RNA chaperone ProQ (212 aa).

Residues 114–149 are disordered; it reads RIAKAGKTSAPAANAKKPVKKPVARRPKAAPSAKPV. Positions 118–129 are enriched in low complexity; that stretch reads AGKTSAPAANAK. Basic residues predominate over residues 130–141; it reads KPVKKPVARRPK.

Belongs to the ProQ family.

The protein resides in the cytoplasm. Functionally, RNA chaperone with significant RNA binding, RNA strand exchange and RNA duplexing activities. This chain is RNA chaperone ProQ, found in Shewanella piezotolerans (strain WP3 / JCM 13877).